We begin with the raw amino-acid sequence, 351 residues long: MPTTMQALVGAESGGYRLAENVDIPVPQRGSILVQVHAVALNPRDAKIVDFSNAPGSLGGCDFAGTVKKVGEGVTRFKEGDRVLAVTFGSNALDKTKGAFAEFALAEEDISCRIPEDFSFTQACSIGLSMATAGLAIFQAPGLELSLHGGKGEAVLVSGGATATGTMATQLLRMAGYTPIVTCSPANNALCQSYGAAACFDYHSPACGADIRVQTNDSLRYVLDCVTDTTTMKMCYEAIGSSGGSYIALETIATTVKYTRRDVRADWFLADAIMGNGVQMAGTYGRAPSPELRRFGKQLFALAENWLHDGSIRHHPLEIQDGGLANMPQALNDMKLGKVHAKKLVVPILGH.

The region spanning 10 to 346 (GAESGGYRLA…GKVHAKKLVV (337 aa)) is the Enoyl reductase (ER) domain. NADP(+) is bound by residues 161–164 (ATAT), 184–187 (SPAN), Tyr-202, 249–250 (LE), and 339–340 (VH).

Belongs to the zinc-containing alcohol dehydrogenase family.

It functions in the pathway secondary metabolite biosynthesis. Trans-enoyl reductase; part of the gene cluster that mediates the biosynthesis of gregatin A, a fungal polyketide featuring an alkylated furanone core. The PKS grgA synthesizes C11 and C4 polyketide chains in the presence and absence of the trans-enoyl reductase grgB, respectively. The polyketide transferase grgF is then responsible for the fusion of the two carbon chains to produce the furanone skeleton of gregatin A. Next, the cytochrome P450 monooxygenase grgG accepts performs the oxidative cyclization to furnish the gregatin scaffold and leads to the formation of desmethylgregatin A. Finally, the O-methyltransferase grgD methylates the carboxyl group of desmethylgregatin A to provide gregatin A. In Penicillium sp, this protein is Trans-enoyl reductase grgB.